A 208-amino-acid chain; its full sequence is Large ribosomal subunit protein bL25 (208 aa).

The disordered stretch occupies residues 178 to 208 (LPPQQSEVPEPDSEEEPKEPEAIKEKDNDGE). Over residues 186–195 (PEPDSEEEPK) the composition is skewed to acidic residues. A compositionally biased stretch (basic and acidic residues) spans 196–208 (EPEAIKEKDNDGE).

Belongs to the bacterial ribosomal protein bL25 family. CTC subfamily. In terms of assembly, part of the 50S ribosomal subunit; part of the 5S rRNA/L5/L18/L25 subcomplex. Contacts the 5S rRNA. Binds to the 5S rRNA independently of L5 and L18.

In terms of biological role, this is one of the proteins that binds to the 5S RNA in the ribosome where it forms part of the central protuberance. This chain is Large ribosomal subunit protein bL25, found in Bacillus pumilus (strain SAFR-032).